The sequence spans 166 residues: Deglycase TK1284 (166 aa).

A PfpI endopeptidase domain is found at 1-166 (MKVLILSADG…WMREFVKLLR (166 aa)). Histidine 101 is an active-site residue.

Belongs to the peptidase C56 family. As to quaternary structure, homohexamer formed by a dimer of trimers that assemble into a hollow ring structure.

The protein localises to the cytoplasm. The enzyme catalyses N(omega)-(1-hydroxy-2-oxopropyl)-L-arginyl-[protein] + H2O = lactate + L-arginyl-[protein] + H(+). It catalyses the reaction N(6)-(1-hydroxy-2-oxopropyl)-L-lysyl-[protein] + H2O = lactate + L-lysyl-[protein] + H(+). It carries out the reaction S-(1-hydroxy-2-oxopropyl)-L-cysteinyl-[protein] + H2O = lactate + L-cysteinyl-[protein] + H(+). The catalysed reaction is N(omega)-(1-hydroxy-2-oxoethyl)-L-arginyl-[protein] + H2O = L-arginyl-[protein] + glycolate + H(+). The enzyme catalyses N(6)-(1-hydroxy-2-oxoethyl)-L-lysyl-[protein] + H2O = glycolate + L-lysyl-[protein] + H(+). It catalyses the reaction S-(1-hydroxy-2-oxoethyl)-L-cysteinyl-[protein] + H2O = glycolate + L-cysteinyl-[protein] + H(+). Deglycase that catalyzes the deglycation of the Maillard adducts formed between amino groups of proteins and reactive carbonyl groups of glyoxals. Thus, functions as a protein deglycase that repairs methylglyoxal- and glyoxal-glycated proteins, and releases repaired proteins and lactate or glycolate, respectively. Deglycates cysteine, arginine and lysine residues in proteins, and thus reactivates these proteins by reversing glycation by glyoxals. Acts on early glycation intermediates (hemithioacetals and aminocarbinols), preventing the formation of advanced glycation endproducts (AGE) that cause irreversible damage. Also displays proteolytic activity. The polypeptide is Deglycase TK1284 (Thermococcus kodakarensis (strain ATCC BAA-918 / JCM 12380 / KOD1) (Pyrococcus kodakaraensis (strain KOD1))).